Here is a 71-residue protein sequence, read N- to C-terminus: R-phycoerythrin gamma-1 chain, chloroplastic (71 aa).

2 residues coordinate phycourobilin: Cys25 and Cys34. A (2R,3E)-phycoerythrobilin-binding site is contributed by Cys49. Cys58 contacts phycourobilin.

As to quaternary structure, heteromer of 6 alpha, 6 beta and 1 gamma chains. Contains four covalently linked bilin chromophores.

It localises to the plastid. The protein resides in the chloroplast thylakoid membrane. Critical for the incorporation of phycoerythrin in the phycobilisome complex. This Gastroclonium coulteri (Red alga) protein is R-phycoerythrin gamma-1 chain, chloroplastic.